A 326-amino-acid polypeptide reads, in one-letter code: ATP synthase gamma chain (326 aa).

The protein belongs to the ATPase gamma chain family. As to quaternary structure, F-type ATPases have 2 components, CF(1) - the catalytic core - and CF(0) - the membrane proton channel. CF(1) has five subunits: alpha(3), beta(3), gamma(1), delta(1), epsilon(1). CF(0) has three main subunits: a, b and c.

Its subcellular location is the cell membrane. Its function is as follows. Produces ATP from ADP in the presence of a proton gradient across the membrane. The gamma chain is believed to be important in regulating ATPase activity and the flow of protons through the CF(0) complex. This Rhodococcus jostii (strain RHA1) protein is ATP synthase gamma chain.